Here is a 221-residue protein sequence, read N- to C-terminus: MQIYQPHPWPLTVEEAITIQEELRHQVITEDQFTQPVQYVAGVDMGFEADGTISRAAVAVLSFPDLQVIETNLAYRPTSFPYIPGFLSFREIPAVLDALAKVQTKPDIILCDGQGIAHPRRLGIASHLGVLLNIPTIGVAKSLLIGKHEELADTKGSWQPLIHRGEIIGAVLRTRVGVKPVYVSSGHKISLPTAIDYVLRCTPKYRLPETTRVADKLASNR.

Residues D44 and D112 each contribute to the Mg(2+) site.

The protein belongs to the endonuclease V family. The cofactor is Mg(2+).

The protein localises to the cytoplasm. It carries out the reaction Endonucleolytic cleavage at apurinic or apyrimidinic sites to products with a 5'-phosphate.. DNA repair enzyme involved in the repair of deaminated bases. Selectively cleaves double-stranded DNA at the second phosphodiester bond 3' to a deoxyinosine leaving behind the intact lesion on the nicked DNA. The protein is Endonuclease V of Nostoc sp. (strain PCC 7120 / SAG 25.82 / UTEX 2576).